A 129-amino-acid polypeptide reads, in one-letter code: Large ribosomal subunit protein uL22 (129 aa).

The protein belongs to the universal ribosomal protein uL22 family. In terms of assembly, part of the 50S ribosomal subunit.

Its function is as follows. This protein binds specifically to 23S rRNA; its binding is stimulated by other ribosomal proteins, e.g. L4, L17, and L20. It is important during the early stages of 50S assembly. It makes multiple contacts with different domains of the 23S rRNA in the assembled 50S subunit and ribosome. The globular domain of the protein is located near the polypeptide exit tunnel on the outside of the subunit, while an extended beta-hairpin is found that lines the wall of the exit tunnel in the center of the 70S ribosome. This Bartonella quintana (strain Toulouse) (Rochalimaea quintana) protein is Large ribosomal subunit protein uL22.